The primary structure comprises 331 residues: Ketol-acid reductoisomerase (NADP(+)) (331 aa).

The KARI N-terminal Rossmann domain maps to 2-182 (AKMYYDQDAD…GGTKAGAIET (181 aa)). NADP(+) contacts are provided by residues 25–28 (FGSQ), Ser51, Ser53, and 83–86 (DEKQ). Residue His108 is part of the active site. Gly134 serves as a coordination point for NADP(+). The region spanning 183 to 328 (TFKEETETDL…KSLREMMPWL (146 aa)) is the KARI C-terminal knotted domain. The Mg(2+) site is built by Asp191, Glu195, Glu227, and Glu231. Ser252 is a binding site for substrate.

Belongs to the ketol-acid reductoisomerase family. Mg(2+) is required as a cofactor.

It carries out the reaction (2R)-2,3-dihydroxy-3-methylbutanoate + NADP(+) = (2S)-2-acetolactate + NADPH + H(+). The enzyme catalyses (2R,3R)-2,3-dihydroxy-3-methylpentanoate + NADP(+) = (S)-2-ethyl-2-hydroxy-3-oxobutanoate + NADPH + H(+). The protein operates within amino-acid biosynthesis; L-isoleucine biosynthesis; L-isoleucine from 2-oxobutanoate: step 2/4. It functions in the pathway amino-acid biosynthesis; L-valine biosynthesis; L-valine from pyruvate: step 2/4. Its function is as follows. Involved in the biosynthesis of branched-chain amino acids (BCAA). Catalyzes an alkyl-migration followed by a ketol-acid reduction of (S)-2-acetolactate (S2AL) to yield (R)-2,3-dihydroxy-isovalerate. In the isomerase reaction, S2AL is rearranged via a Mg-dependent methyl migration to produce 3-hydroxy-3-methyl-2-ketobutyrate (HMKB). In the reductase reaction, this 2-ketoacid undergoes a metal-dependent reduction by NADPH to yield (R)-2,3-dihydroxy-isovalerate. The protein is Ketol-acid reductoisomerase (NADP(+)) of Caldanaerobacter subterraneus subsp. tengcongensis (strain DSM 15242 / JCM 11007 / NBRC 100824 / MB4) (Thermoanaerobacter tengcongensis).